A 266-amino-acid polypeptide reads, in one-letter code: 15-hydroxyprostaglandin dehydrogenase [NAD(+)] (266 aa).

Residues G12–A20, D36–W37, C63–V65, and N91 each bind NAD(+). Residues S138 and Q148 each coordinate substrate. Residue Y151 is the Proton acceptor of the active site. NAD(+) is bound by residues Y151–K155 and V186–T188.

This sequence belongs to the short-chain dehydrogenases/reductases (SDR) family. Homodimer.

Its subcellular location is the cytoplasm. It carries out the reaction prostaglandin E2 + NAD(+) = 15-oxoprostaglandin E2 + NADH + H(+). It catalyses the reaction (15S)-hydroxy-(5Z,8Z,11Z,13E)-eicosatetraenoate + NAD(+) = 15-oxo-(5Z,8Z,11Z,13E)-eicosatetraenoate + NADH + H(+). The catalysed reaction is (11R)-hydroxy-(5Z,8Z,12E,14Z)-eicosatetraenoate + NAD(+) = 11-oxo-(5Z,8Z,12E,14Z)-eicosatetraenoate + NADH + H(+). The enzyme catalyses lipoxin A4 + NAD(+) = 15-oxo-(5S,6R)-dihydroxy-(7E,9E,11Z,13E)-eicosatetraenoate + NADH + H(+). It carries out the reaction 15-oxo-(5S,6R)-dihydroxy-(7E,9E,11Z)-eicosatrienoate + NADH + H(+) = (5S,6R,15S)-trihydroxy-(7E,9E,11Z)-eicosatrienoate + NAD(+). It catalyses the reaction prostaglandin A1 + NAD(+) = 15-oxo-prostaglandin A1 + NADH + H(+). The catalysed reaction is prostaglandin E1 + NAD(+) = 15-oxoprostaglandin E1 + NADH + H(+). The enzyme catalyses 14-hydroxy-(4Z,7Z,10Z,12E,16Z,19Z)-docosahexaenoate + NAD(+) = 14-oxo-(4Z,7Z,10Z,12E,16Z,19Z)-docosahexaenoate + NADH + H(+). It carries out the reaction resolvin E1 + NAD(+) = 18-oxo-resolvin E1 + NADH + H(+). It catalyses the reaction resolvin D1 + NAD(+) = 8-oxoresolvin D1 + NADH + H(+). The catalysed reaction is resolvin D1 + NAD(+) = 17-oxoresolvin D1 + NADH + H(+). The enzyme catalyses resolvin D2 + NAD(+) = 7-oxoresolvin D2 + NADH + H(+). It carries out the reaction resolvin D2 + NAD(+) = 16-oxoresolvin D2 + NADH + H(+). In terms of biological role, catalyzes the NAD-dependent dehydrogenation (oxidation) of a broad array of hydroxylated polyunsaturated fatty acids (mainly eicosanoids and docosanoids, including prostaglandins, lipoxins and resolvins), yielding their corresponding keto (oxo) metabolites. Decreases the levels of the pro-proliferative prostaglandins such as prostaglandin E2 (whose activity is increased in cancer because of an increase in the expression of cyclooxygenase 2) and generates oxo-fatty acid products that can profoundly influence cell function by abrogating pro-inflammatory cytokine expression. Converts resolvins E1, D1 and D2 to their oxo products, which represents a mode of resolvin inactivation. Resolvin E1 plays important roles during the resolution phase of acute inflammation, while resolvins D1 and D2 have a unique role in obesity-induced adipose inflammation. This Rattus norvegicus (Rat) protein is 15-hydroxyprostaglandin dehydrogenase [NAD(+)] (Hpgd).